Reading from the N-terminus, the 66-residue chain is MAEITIPLRDVIEVTEDATYAGVEVTSAIRIGTAYGTTDRILIKTVKQNYVLFTTNKVSILNAINA.

Belongs to the UPF0457 family.

The protein is UPF0457 protein BA_2525/GBAA_2525/BAS2348 of Bacillus anthracis.